The following is a 113-amino-acid chain: Large ribosomal subunit protein uL18 (113 aa).

Belongs to the universal ribosomal protein uL18 family. In terms of assembly, part of the 50S ribosomal subunit; part of the 5S rRNA/L5/L18/L25 subcomplex. Contacts the 5S and 23S rRNAs.

Its function is as follows. This is one of the proteins that bind and probably mediate the attachment of the 5S RNA into the large ribosomal subunit, where it forms part of the central protuberance. The polypeptide is Large ribosomal subunit protein uL18 (Phocaeicola vulgatus (strain ATCC 8482 / DSM 1447 / JCM 5826 / CCUG 4940 / NBRC 14291 / NCTC 11154) (Bacteroides vulgatus)).